A 596-amino-acid chain; its full sequence is Elongation factor 4 (596 aa).

The 183-residue stretch at 2 to 184 (KNIRNFAIIA…SIVKYIPPPE (183 aa)) folds into the tr-type G domain. GTP-binding positions include 14-19 (DHGKST) and 131-134 (NKID).

This sequence belongs to the TRAFAC class translation factor GTPase superfamily. Classic translation factor GTPase family. LepA subfamily.

The protein resides in the cell inner membrane. The enzyme catalyses GTP + H2O = GDP + phosphate + H(+). In terms of biological role, required for accurate and efficient protein synthesis under certain stress conditions. May act as a fidelity factor of the translation reaction, by catalyzing a one-codon backward translocation of tRNAs on improperly translocated ribosomes. Back-translocation proceeds from a post-translocation (POST) complex to a pre-translocation (PRE) complex, thus giving elongation factor G a second chance to translocate the tRNAs correctly. Binds to ribosomes in a GTP-dependent manner. This is Elongation factor 4 from Neorickettsia sennetsu (strain ATCC VR-367 / Miyayama) (Ehrlichia sennetsu).